Reading from the N-terminus, the 871-residue chain is Transient receptor potential cation channel subfamily V member 4 (871 aa).

A disordered region spans residues 1–68; that stretch reads MADSSEGPRA…GPGDGRPNLR (68 aa). Residues 1–469 lie on the Cytoplasmic side of the membrane; sequence MADSSEGPRA…RDKWRKFGAV (469 aa). Residue Tyr110 is modified to Phosphotyrosine. ATP is bound by residues Lys192, Lys197, Asn201, 236–239, and Arg248; that span reads YRGQ. ANK repeat units follow at residues 237-266 and 284-313; these read RGQT…DVHA and FGEL…KKAD. 249-251 contacts a 1,2-diacyl-sn-glycero-3-phospho-(1D-myo-inositol-4,5-bisphosphate); the sequence is RCK. Tyr253 bears the Phosphotyrosine mark. A 1,2-diacyl-sn-glycero-3-phospho-(1D-myo-inositol-4,5-bisphosphate) is bound by residues 296–299 and Lys344; that span reads NQPH. Residues 369–398 form an ANK 3 repeat; the sequence is DGLSPLMMAAKTGKIGIFQHIIRREVTDED. Residues 470-490 form a helical membrane-spanning segment; it reads SFYINVVSYLCAMVIFTLTAY. Residues 491 to 507 are Extracellular-facing; sequence YQPLEGTPPYPYRTTVD. The helical transmembrane segment at 508-534 threads the bilayer; it reads YLRLAGEVITLFTGVLFFFTNIKDLFM. The Cytoplasmic segment spans residues 535–547; the sequence is KKCPGVNSLFIDG. A helical transmembrane segment spans residues 548–568; it reads SFQLLYFIYSVLVIVSAALYL. Residues 569–572 lie on the Extracellular side of the membrane; the sequence is AGIE. The helical transmembrane segment at 573-593 threads the bilayer; that stretch reads AYLAVMVFALVLGWMNALYFT. Over 594–608 the chain is Cytoplasmic; sequence RGLKLTGTYSIMIQK. A helical transmembrane segment spans residues 609–636; it reads ILFKDLFRFLLVYLLFMIGYASALVSLL. The Extracellular segment spans residues 637-665; it reads NPCANMKVCNEDQTNCTVPTYPSCRDSET. Positions 666-685 form an intramembrane region, pore-forming; sequence FSTFLLDLFKLTIGMGDLEM. The Selectivity filter signature appears at 679-682; sequence GMGD. Asp682 provides a ligand contact to Ca(2+). The Extracellular segment spans residues 686–693; it reads LSSTKYPV. Residues 694–722 traverse the membrane as a helical segment; it reads VFIILLVTYIILTFVLLLNMLIALMGETV. The Cytoplasmic segment spans residues 723-871; the sequence is GQVSKESKHI…RKWRTDDAPL (149 aa). Tyr805 is subject to Phosphotyrosine. An interaction with calmodulin and ITPR3 region spans residues 812–831; it reads HTVGRLRRDRWSSVVPRVVE. Ser824 is modified (phosphoserine). Positions 849–871 are disordered; sequence GNPRCDGHQQGYPRKWRTDDAPL.

It belongs to the transient receptor (TC 1.A.4) family. TrpV subfamily. TRPV4 sub-subfamily. As to quaternary structure, homotetramer. Self-associates in an isoform-specific manner. Isoform 1 and isoform 5 can oligomerize, but isoform 2, isoform 4 and isoform 6 cannot oligomerize. Interacts with calmodulin. Interacts with Map7 and Src family Tyr protein kinases LYN, SRC, FYN, HCK, LCK and YES. Interacts with CTNNB1. The TRPV4 and CTNNB1 complex can interact with CDH1. Interacts with PACSIN1, PACSIN2 and PACSIN3 (via SH3 domain). Part of a complex containing MLC1, AQP4, HEPACAM and ATP1B1. Interacts with ITPR3. Interacts with AQP5; the interaction is probably indirect and regulates TRPV4 activation by hypotonicity. Interacts with ANO1. Interacts (via C-terminus) with PKD2 (via C-terminus). Interacts with DDX3X; this interaction is decreased when the channel is activated. N-glycosylated. In terms of tissue distribution, found in the synoviocytes from patients with (RA) and without (CTR) rheumatoid arthritis (at protein level).

The protein localises to the cell membrane. It is found in the apical cell membrane. It localises to the cell junction. The protein resides in the adherens junction. Its subcellular location is the cell projection. The protein localises to the cilium. It is found in the endoplasmic reticulum. The catalysed reaction is Ca(2+)(in) = Ca(2+)(out). Channel activation is inhibited by binding to phosphatidylinositol-4,5-bisphosphate, and to a much lesser degree by phosphatidylinositol-3,4,5-trisphosphate. Not inhibited by phosphatidylinositol-3,4-bisphosphate and phosphatidylinositol-3,5-bisphosphate. Its function is as follows. Non-selective calcium permeant cation channel involved in osmotic sensitivity and mechanosensitivity. Activation by exposure to hypotonicity within the physiological range exhibits an outward rectification. Also activated by heat, low pH, citrate and phorbol esters. Increase of intracellular Ca(2+) potentiates currents. Channel activity seems to be regulated by a calmodulin-dependent mechanism with a negative feedback mechanism. Promotes cell-cell junction formation in skin keratinocytes and plays an important role in the formation and/or maintenance of functional intercellular barriers. Acts as a regulator of intracellular Ca(2+) in synoviocytes. Plays an obligatory role as a molecular component in the nonselective cation channel activation induced by 4-alpha-phorbol 12,13-didecanoate and hypotonic stimulation in synoviocytes and also regulates production of IL-8. Together with PKD2, forms mechano- and thermosensitive channels in cilium. Negatively regulates expression of PPARGC1A, UCP1, oxidative metabolism and respiration in adipocytes. Regulates expression of chemokines and cytokines related to pro-inflammatory pathway in adipocytes. Together with AQP5, controls regulatory volume decrease in salivary epithelial cells. Required for normal development and maintenance of bone and cartilage. In its inactive state, may sequester DDX3X at the plasma membrane. When activated, the interaction between both proteins is affected and DDX3X relocalizes to the nucleus. In neurons of the central nervous system, could play a role in triggering voluntary water intake in response to increased sodium concentration in body fluid. Functionally, non-selective calcium permeant cation channel involved in osmotic sensitivity and mechanosensitivity. Activation by exposure to hypotonicity within the physiological range exhibits an outward rectification. Also activated by phorbol esters. Has the same channel activity as isoform 1, and is activated by the same stimuli. In terms of biological role, lacks channel activity, due to impaired oligomerization and intracellular retention. (Microbial infection) Facilitates hepatitis C virus (HCV) replication, possibly through its action on DDX3X. Its function is as follows. (Microbial infection) Facilitates Dengue virus (DENV) replication, possibly through its action on DDX3X. Functionally, (Microbial infection) Facilitates Zika virus (ZIKV) replication, possibly through its action on DDX3X. This is Transient receptor potential cation channel subfamily V member 4 (TRPV4) from Homo sapiens (Human).